Consider the following 162-residue polypeptide: Crossover junction endodeoxyribonuclease RuvC (162 aa).

Active-site residues include D7, E67, and D140. Mg(2+)-binding residues include D7, E67, and D140.

The protein belongs to the RuvC family. In terms of assembly, homodimer which binds Holliday junction (HJ) DNA. The HJ becomes 2-fold symmetrical on binding to RuvC with unstacked arms; it has a different conformation from HJ DNA in complex with RuvA. In the full resolvosome a probable DNA-RuvA(4)-RuvB(12)-RuvC(2) complex forms which resolves the HJ. Mg(2+) serves as cofactor.

Its subcellular location is the cytoplasm. The enzyme catalyses Endonucleolytic cleavage at a junction such as a reciprocal single-stranded crossover between two homologous DNA duplexes (Holliday junction).. Functionally, the RuvA-RuvB-RuvC complex processes Holliday junction (HJ) DNA during genetic recombination and DNA repair. Endonuclease that resolves HJ intermediates. Cleaves cruciform DNA by making single-stranded nicks across the HJ at symmetrical positions within the homologous arms, yielding a 5'-phosphate and a 3'-hydroxyl group; requires a central core of homology in the junction. The consensus cleavage sequence is 5'-(A/T)TT(C/G)-3'. Cleavage occurs on the 3'-side of the TT dinucleotide at the point of strand exchange. HJ branch migration catalyzed by RuvA-RuvB allows RuvC to scan DNA until it finds its consensus sequence, where it cleaves and resolves the cruciform DNA. In Pseudothermotoga lettingae (strain ATCC BAA-301 / DSM 14385 / NBRC 107922 / TMO) (Thermotoga lettingae), this protein is Crossover junction endodeoxyribonuclease RuvC.